Reading from the N-terminus, the 285-residue chain is SLAM family member 8 (285 aa).

An N-terminal signal peptide occupies residues 1–22 (MVMRPLWSLLLWEALLPITVTG). Residues 23–233 (AQVLSKVGGS…AAPGKASYKD (211 aa)) lie on the Extracellular side of the membrane. Asn-85 carries N-linked (GlcNAc...) asparagine glycosylation. In terms of domain architecture, Ig-like C2-type spans 128–215 (PVVQVFIAVE…PVSWDLATVT (88 aa)). Cys-152 and Cys-201 are disulfide-bonded. Residues 234-254 (VLLVVVPVSLLLMLVTLFSAW) traverse the membrane as a helical segment. The Cytoplasmic segment spans residues 255–285 (HWCPCSGKKKKDVHADRVGPETENPLVQDLP). Residues 262–285 (KKKKDVHADRVGPETENPLVQDLP) are disordered.

Expressed in lymph node, spleen, thymus and bone marrow.

Its subcellular location is the membrane. In terms of biological role, may play a role in B-lineage commitment and/or modulation of signaling through the B-cell receptor. The polypeptide is SLAM family member 8 (SLAMF8) (Homo sapiens (Human)).